The chain runs to 690 residues: Rho guanine nucleotide exchange factor 4 (690 aa).

The ABR (APC-binding region) domain stretch occupies residues 73-126 (KTQRKKLQKQAHVERRLHIGAVHKDGVKCWRKTIITSPESLNLPRRSHPLSQSA). The segment at 113–145 (LNLPRRSHPLSQSAPTGLNHMGWPEHTPGTAMP) is disordered. Residues 194–253 (GSVVCAEALWDHVTMDDQELGFKAGDVIEVMDATNREWWWGRVADGEGWFPASFVRLRVN) enclose the SH3 domain. The disordered stretch occupies residues 257 to 282 (PADDDAPLAGNSGAEDGGAEAQSSKD). In terms of domain architecture, DH spans 284–468 (MRTNVINEIL…KNVAQLINER (185 aa)). A PH domain is found at 499–606 (ELIYSGELTR…WLKAFARERE (108 aa)).

Isoform 3 interacts with RHOA and RAC1, and (via ABR domain) with APC. Found in a complex consisting of ARHGEF4, APC and CTNNB1. As to expression, expressed at high levels in the brain, skeletal muscle and testis and at low levels in the kidney, lung, small intestine, ovary and prostate. Expression is aberrantly enhanced in most colorectal tumors.

It is found in the cytoplasm. The protein localises to the cell projection. The protein resides in the ruffle membrane. Its function is as follows. Acts as a guanine nucleotide exchange factor (GEF) for RHOA, RAC1 and CDC42 GTPases. Binding of APC may activate RAC1 GEF activity. The APC-ARHGEF4 complex seems to be involved in cell migration as well as in E-cadherin-mediated cell-cell adhesion. Required for MMP9 up-regulation via the JNK signaling pathway in colorectal tumor cells. Involved in tumor angiogenesis and may play a role in intestinal adenoma formation and tumor progression. The chain is Rho guanine nucleotide exchange factor 4 (ARHGEF4) from Homo sapiens (Human).